Consider the following 325-residue polypeptide: MVGSMENPGSWGLACLLISTSRFNRYMPYYTMMAAVWSTLIAGALKLQEDPASLSVEYILFKAGLCFVHCLLLCGAGNTWNDLIDRDIDARVERTKMRPLASGKVSTVEALVWMVGQYFLSVKMLDLILDNRSIWGLMLPLTASIMLYPYLKRPVFSRVFIYPQYILGLAVAYPSITGWASINGQEQSMSEIFTHCTPICLLIFFWCLYFNTAYSHQDSVDDRKMNINSAYVVAGQRIRLFLAFLGALPLAVIPYVVLKINSPWLWFSWMAVWTVSIVMQIVRFDSKKLESGGRIHWDNFLLGLWTTVACIVEVGLQKVEFWNLI.

3 helical membrane-spanning segments follow: residues 27–47, 56–76, and 108–128; these read MPYY…ALKL, VEYI…LCGA, and VEAL…LDLI. An N-linked (GlcNAc...) asparagine glycan is attached at Asn-131. 6 helical membrane-spanning segments follow: residues 134–151, 159–179, 192–212, 240–260, 262–282, and 295–315; these read IWGL…YPYL, VFIY…ITGW, IFTH…YFNT, LFLA…VLKI, SPWL…MQIV, and IHWD…VEVG.

This sequence belongs to the UbiA prenyltransferase family. Mg(2+) serves as cofactor.

It is found in the golgi apparatus membrane. The enzyme catalyses 5,7-dihydroxy-4-methylphthalide + (2E,6E)-farnesyl diphosphate = 4-farnesyl-3,5-dihydroxy-6-methylphthalide + diphosphate. Its pathway is secondary metabolite biosynthesis; terpenoid biosynthesis. Functionally, polyprenyl transferase; part of the gene cluster that mediates the biosynthesis of mycophenolic acid (MPA), the first isolated antibiotic natural product in the world obtained from a culture of Penicillium brevicompactum in 1893. MpaA is a Golgi apparatus-associated enzyme that catalyzes the prenylation of 5,7-dihydroxy-4,6-dimethylphthalide (DHMP) to yield farnesyl-DHMP (FDHMP). The first step of the pathway is the synthesis of 5-methylorsellinic acid (5MOA) by the cytosolic polyketide synthase mpaC. 5MOA is then converted to the phthalide compound 5,7-dihydroxy-4,6-dimethylphthalide (DHMP) by the endoplasmic reticulum-bound cytochrome P450 monooxygenase mpaDE. MpaDE first catalyzes hydroxylation of 5-MOA to 4,6-dihydroxy-2-(hydroxymethyl)-3-methylbenzoic acid (DHMB). MpaDE then acts as a lactone synthase that catalyzes the ring closure to convert DHMB into DHMP. The next step is the prenylation of DHMP by the Golgi apparatus-associated prenyltransferase mpaA to yield farnesyl-DHMP (FDHMP). The ER-bound oxygenase mpaB then mediates the oxidative cleavage the C19-C20 double bond in FDHMP to yield FDHMP-3C via a mycophenolic aldehyde intermediate. The O-methyltransferase mpaG catalyzes the methylation of FDHMP-3C to yield MFDHMP-3C. After the cytosolic methylation of FDHMP-3C, MFDHMP-3C enters into peroxisomes probably via free diffusion due to its low molecular weight. Upon a peroxisomal CoA ligation reaction, catalyzed by a beta-oxidation component enzyme acyl-CoA ligase ACL891, MFDHMP-3C-CoA would then be restricted to peroxisomes for the following beta-oxidation pathway steps. The peroxisomal beta-oxidation machinery than converts MFDHMP-3C-CoA into MPA_CoA, via a beta-oxidation chain-shortening process. Finally mpaH acts as a peroxisomal acyl-CoA hydrolase with high substrate specificity toward MPA-CoA to release the final product MPA. In Penicillium roqueforti (strain FM164), this protein is Polyprenyl transferase mpaA.